The chain runs to 158 residues: Transcriptional repressor NrdR (158 aa).

The interval 1 to 22 (MRCPYCGSEDTQVKDSRPAEDN) is disordered. A zinc finger spans residues 3–34 (CPYCGSEDTQVKDSRPAEDNTSIRRRRICPDC). Basic and acidic residues predominate over residues 11–22 (TQVKDSRPAEDN). An ATP-cone domain is found at 49–139 (LMVIKKTGRK…VYRDFSHAED (91 aa)).

The protein belongs to the NrdR family. Zn(2+) serves as cofactor.

Its function is as follows. Negatively regulates transcription of bacterial ribonucleotide reductase nrd genes and operons by binding to NrdR-boxes. This Rhizobium rhizogenes (strain K84 / ATCC BAA-868) (Agrobacterium radiobacter) protein is Transcriptional repressor NrdR.